The primary structure comprises 230 residues: 5'-methylthioadenosine/S-adenosylhomocysteine nucleosidase (230 aa).

Glutamate 12 acts as the Proton acceptor in catalysis. Substrate-binding positions include glycine 78, methionine 153, and 174–175 (ME). The active-site Proton donor is aspartate 198.

The protein belongs to the PNP/UDP phosphorylase family. MtnN subfamily.

The enzyme catalyses S-adenosyl-L-homocysteine + H2O = S-(5-deoxy-D-ribos-5-yl)-L-homocysteine + adenine. It catalyses the reaction S-methyl-5'-thioadenosine + H2O = 5-(methylsulfanyl)-D-ribose + adenine. It carries out the reaction 5'-deoxyadenosine + H2O = 5-deoxy-D-ribose + adenine. The protein operates within amino-acid biosynthesis; L-methionine biosynthesis via salvage pathway; S-methyl-5-thio-alpha-D-ribose 1-phosphate from S-methyl-5'-thioadenosine (hydrolase route): step 1/2. In terms of biological role, catalyzes the irreversible cleavage of the glycosidic bond in both 5'-methylthioadenosine (MTA) and S-adenosylhomocysteine (SAH/AdoHcy) to adenine and the corresponding thioribose, 5'-methylthioribose and S-ribosylhomocysteine, respectively. Also cleaves 5'-deoxyadenosine, a toxic by-product of radical S-adenosylmethionine (SAM) enzymes, into 5-deoxyribose and adenine. This Aeromonas salmonicida (strain A449) protein is 5'-methylthioadenosine/S-adenosylhomocysteine nucleosidase.